The chain runs to 265 residues: MGQKIHPTGFRLAVSRNWASRWYANNTKFAGMLKEDIEVREFLKKKLKNASVGRVVIERPARNARITIYSSRPGVVIGKKGEDIELLKAELQRRMGVPVHVNIEEIRKPETDAQLIADSITQQLERRIMFRRAMKRAMQNAMRLGAQGIKIMSSGRLNGIEIARTEWYREGRVPLHTLRADIDYGFSEAETTYGIIGVKVWVYKGDHLGRNDAPVVEEPQEDRRRRPGRPEGRRREGEGRPAGNRRGGAGAGRRAAPGADAKSGE.

The KH type-2 domain maps to 39-107 (VREFLKKKLK…PVHVNIEEIR (69 aa)). Positions 211–265 (NDAPVVEEPQEDRRRRPGRPEGRRREGEGRPAGNRRGGAGAGRRAAPGADAKSGE) are disordered. Basic and acidic residues predominate over residues 221 to 239 (EDRRRRPGRPEGRRREGEG).

It belongs to the universal ribosomal protein uS3 family. In terms of assembly, part of the 30S ribosomal subunit. Forms a tight complex with proteins S10 and S14.

Functionally, binds the lower part of the 30S subunit head. Binds mRNA in the 70S ribosome, positioning it for translation. The sequence is that of Small ribosomal subunit protein uS3 from Cupriavidus metallidurans (strain ATCC 43123 / DSM 2839 / NBRC 102507 / CH34) (Ralstonia metallidurans).